We begin with the raw amino-acid sequence, 246 residues long: Probable transcriptional regulatory protein CTC_02215 (246 aa).

The protein belongs to the TACO1 family.

It is found in the cytoplasm. The protein is Probable transcriptional regulatory protein CTC_02215 of Clostridium tetani (strain Massachusetts / E88).